A 296-amino-acid chain; its full sequence is Urease accessory protein UreD (296 aa).

Belongs to the UreD family. UreD, UreF and UreG form a complex that acts as a GTP-hydrolysis-dependent molecular chaperone, activating the urease apoprotein by helping to assemble the nickel containing metallocenter of UreC. The UreE protein probably delivers the nickel.

The protein resides in the cytoplasm. In terms of biological role, required for maturation of urease via the functional incorporation of the urease nickel metallocenter. This is Urease accessory protein UreD from Nitrosococcus oceani (strain ATCC 19707 / BCRC 17464 / JCM 30415 / NCIMB 11848 / C-107).